Consider the following 264-residue polypeptide: uncharacterized protein (264 aa).

This is an uncharacterized protein from Escherichia coli (strain K12).